The chain runs to 336 residues: Dihydroorotate dehydrogenase (quinone) (336 aa).

Residues 62-66 (AGLDK) and T86 each bind FMN. K66 contacts substrate. 111–115 (NRMGF) is a substrate binding site. FMN is bound by residues N139 and N172. N172 is a binding site for substrate. S175 serves as the catalytic Nucleophile. N177 lines the substrate pocket. K217 and T245 together coordinate FMN. Substrate is bound at residue 246 to 247 (NT). FMN-binding positions include G268, G297, and 318–319 (YS).

Belongs to the dihydroorotate dehydrogenase family. Type 2 subfamily. Monomer. The cofactor is FMN.

The protein resides in the cell membrane. The catalysed reaction is (S)-dihydroorotate + a quinone = orotate + a quinol. The protein operates within pyrimidine metabolism; UMP biosynthesis via de novo pathway; orotate from (S)-dihydroorotate (quinone route): step 1/1. In terms of biological role, catalyzes the conversion of dihydroorotate to orotate with quinone as electron acceptor. The polypeptide is Dihydroorotate dehydrogenase (quinone) (Serratia proteamaculans (strain 568)).